We begin with the raw amino-acid sequence, 64 residues long: Gallinacin-2 (64 aa).

A signal peptide spans 1-22 (MRILYLLFSLLFLALQVSPGLS). A propeptide spanning residues 23 to 28 (SPRRDM) is cleaved from the precursor. 3 cysteine pairs are disulfide-bonded: Cys-31/Cys-57, Cys-36/Cys-51, and Cys-41/Cys-58.

As to expression, expressed in circulating heterophil granulocytes and bone marrow (at protein level). Strong expression in the bone marrow, lung and testis. Moderate expression in the bursa and intestine. Low expression in the cloaca, gall bladder, brain, pancreas, trachea, air sacs and spleen. Expressed in the vagina, ovarian stroma and the theca layer of the ovarian follicle, but not in the granulosa layer of the ovarian follicle.

It localises to the secreted. Its subcellular location is the cytoplasmic granule. Potent antibacterial activity against the Gram-negative bacterium E.coli ML-35, and against the Gram-positive bacterium L.monocytogenes EGD. Lacks antifungal activity against C.albicans. This Gallus gallus (Chicken) protein is Gallinacin-2 (GAL2).